The following is a 309-amino-acid chain: tRNA-cytidine(32) 2-sulfurtransferase (309 aa).

The PP-loop motif signature appears at 57 to 62 (SGGKDS). Residues Cys132, Cys135, and Cys223 each coordinate [4Fe-4S] cluster.

The protein belongs to the TtcA family. In terms of assembly, homodimer. Mg(2+) serves as cofactor. [4Fe-4S] cluster is required as a cofactor.

The protein resides in the cytoplasm. The enzyme catalyses cytidine(32) in tRNA + S-sulfanyl-L-cysteinyl-[cysteine desulfurase] + AH2 + ATP = 2-thiocytidine(32) in tRNA + L-cysteinyl-[cysteine desulfurase] + A + AMP + diphosphate + H(+). The protein operates within tRNA modification. Catalyzes the ATP-dependent 2-thiolation of cytidine in position 32 of tRNA, to form 2-thiocytidine (s(2)C32). The sulfur atoms are provided by the cysteine/cysteine desulfurase (IscS) system. This chain is tRNA-cytidine(32) 2-sulfurtransferase, found in Variovorax paradoxus (strain S110).